The following is a 397-amino-acid chain: MAKEKFDRSLPHVNVGTIGHVDHGKTTLTAALTRVCSEVFGSAIVDFDKIDSAPEEKARGITINTAHVEYNSLIRHYAHVDCPGHADYVKNMITGAAQMDGAILVCSAADGPMPQTREHILLSRQVGVPYIVVYLNKADLVDDAELLELVEMEVRDLLSTYDFPGDDTPIIIGSARMALEGKDDNEMGTTSVRKLVETLDSYIPDPVRVIDKPFLMPIEDVFSISGRGTVVTGRIERGIVKVQDPLEIVGLRDTTVTTCTGVEMFRKLLDEGRAGENCGVLLRGTKRDDVERGQVLVKPGSVKPHTKFEAEVYVLSKEEGGRHTPFFKGYRPQFYFRTTDVTGNCELPEGVEMVMPGDNIKMVVTLIKTIAMEDGLRFAIREGGRTVGAGVVAKIIE.

The region spanning 10–207 (LPHVNVGTIG…TLDSYIPDPV (198 aa)) is the tr-type G domain. Positions 19–26 (GHVDHGKT) are G1. 19–26 (GHVDHGKT) provides a ligand contact to GTP. A Mg(2+)-binding site is contributed by Thr-26. Residues 60 to 64 (GITIN) are G2. Residues 81 to 84 (DCPG) are G3. GTP is bound by residues 81 to 85 (DCPGH) and 136 to 139 (NKAD). Residues 136 to 139 (NKAD) form a G4 region. Residues 174 to 176 (SAR) are G5.

Belongs to the TRAFAC class translation factor GTPase superfamily. Classic translation factor GTPase family. EF-Tu/EF-1A subfamily. As to quaternary structure, monomer.

It is found in the cytoplasm. The catalysed reaction is GTP + H2O = GDP + phosphate + H(+). In terms of biological role, GTP hydrolase that promotes the GTP-dependent binding of aminoacyl-tRNA to the A-site of ribosomes during protein biosynthesis. This is Elongation factor Tu from Pseudomonas fluorescens (strain SBW25).